Reading from the N-terminus, the 635-residue chain is Cilia- and flagella-associated protein 206 (635 aa).

This sequence belongs to the CFAP206 family.

Its subcellular location is the cytoplasm. The protein localises to the cytoskeleton. The protein resides in the cilium axoneme. May regulate cilium motility through its role in the assembly of the axonemal RS2 radial spoke. The chain is Cilia- and flagella-associated protein 206 from Tetrahymena thermophila (strain SB210).